The following is a 76-amino-acid chain: uncharacterized protein (76 aa).

It to K.pneumoniae LtrA, E.coli YjiE, and YhcS.

This is an uncharacterized protein from Escherichia coli O6:H1 (strain CFT073 / ATCC 700928 / UPEC).